Reading from the N-terminus, the 321-residue chain is Phospholipid phosphatase-related protein type 5 (321 aa).

6 helical membrane-spanning segments follow: residues 10-30 (SSMLYFQMVIMAGTVMLAYYF), 62-82 (AVPPVLLYSLAAGVPVLVIIV), 122-142 (FLGIYTFGLFATDIFVNAGQV), 196-213 (AALSVYAAMYLTMYITNT), 225-245 (VLCLGLMCLAFLTGLNRVAEY), and 252-272 (VIAGFLVGISIAVFLVVCVVN).

The protein belongs to the PA-phosphatase related phosphoesterase family. As to expression, isoform 1 is expressed in brain, lung, kidney and colon. Isoform 2 is expressed in placenta, skeletal muscle and kidney.

It localises to the cell membrane. Induces filopodia formation and promotes neurite growth in a CDC42-independent manner; impedes neurite growth inhibitory-mediated axonal retraction. This Homo sapiens (Human) protein is Phospholipid phosphatase-related protein type 5.